The chain runs to 838 residues: Shutoff protein (838 aa).

A disordered region spans residues 1 to 102 (MEDQHSAASE…EQEEDSPDRY (102 aa)). Positions 18-35 (TLPPPPPPPPPPTSPPPS) are enriched in pro residues. Low complexity predominate over residues 52 to 65 (TCSSSSSSSASSEC). Residues 291–353 (LMQTLLVRRA…ACMVTVQLHC (63 aa)) are binding to host EIF4G. One can recognise an RRM domain in the interval 356–474 (TFLTSREMVR…SLWTGFDERT (119 aa)). A phosphotyrosine; by host mark is found at Tyr-373 and Tyr-690. The tract at residues 693-838 (PHTGEELNTA…QELRRPQRGS (146 aa)) is disordered. Over residues 701-710 (TAAPSTAHHA) the composition is skewed to low complexity. 2 stretches are compositionally biased toward basic and acidic residues: residues 737 to 746 (SYADRVRSEL) and 770 to 787 (HSRD…DQRQ). Over residues 813-829 (QALLHQQQQQQEHQPAQ) the composition is skewed to low complexity.

It belongs to the adenoviridae shutoff protein family. As to quaternary structure, monomer. Interacts with hexon protein; this interaction allows chaperoning and trimerization of hexon proteins. Interacts (via N-terminus) with host initiation factor EIF4G (via C-terminus). Interacts (via RRM domain) with viral mRNAs that contain the tripartite leader; this interaction allows ribosome shunting and expression of viral late mRNAs. In terms of processing, might be cleaved by the viral protease. Post-translationally, phosphorylated. Tyrosine phosphorylation enhances preferential binding to tripartite leader mRNAs and allows ribosome shunting. Methylated. Asymmetric dimethylation by host PRMT1 of the Arg/Gly-rich region may regulate shutoff protein binding to hexon and promote the capsid assembly in the nucleus.

The protein resides in the host cytoplasm. In terms of biological role, protein that inhibits host translation while promoting late viral translation by ribosome shunting. Blocks host cap-dependent translation by binding to eIF4G, displacing MKNK1 from cap initiation complexes and preventing EIF4E phosphorylation. Binds to the tripartite leader sequence of viral late mRNAs and recruits host eIF4G, PABPC1/poly-A binding protein and 40S ribosomes subunits on viral mRNAs, allowing ribosome shunting and efficient translation of late viral mRNAs even though conventional translation via ribosome scanning from the cap has been shut off in the host cell. During assembly, acts as a chaperone protein that helps hexon proteins assembly into trimers. This Porcine adenovirus A serotype 3 (PAdV-3) protein is Shutoff protein.